We begin with the raw amino-acid sequence, 150 residues long: Single-stranded DNA-binding protein 1 (150 aa).

The SSB domain occupies 1-104 (MINNVVLVGR…VVADTFQMLE (104 aa)). Positions 103-120 (LESNKTQGQQTSKPQAQN) are enriched in polar residues. The segment at 103–150 (LESNKTQGQQTSKPQAQNKKPQAPDPFKAPAADPFAGGTEISDDDLPF) is disordered. Residues 121–138 (KKPQAPDPFKAPAADPFA) show a composition bias toward low complexity. The short motif at 145-150 (DDDLPF) is the Important for interaction with partner proteins element.

In terms of assembly, homotetramer.

Its function is as follows. Plays an important role in DNA replication, recombination and repair. Binds to ssDNA and to an array of partner proteins to recruit them to their sites of action during DNA metabolism. The polypeptide is Single-stranded DNA-binding protein 1 (ssb1) (Lactococcus lactis subsp. lactis (strain IL1403) (Streptococcus lactis)).